The following is a 711-amino-acid chain: Polyribonucleotide nucleotidyltransferase (711 aa).

Mg(2+)-binding residues include aspartate 489 and aspartate 495. Residues proline 556–isoleucine 615 enclose the KH domain. Residues glycine 625–lysine 693 enclose the S1 motif domain.

Belongs to the polyribonucleotide nucleotidyltransferase family. Component of the RNA degradosome, which is a multiprotein complex involved in RNA processing and mRNA degradation. Mg(2+) serves as cofactor.

Its subcellular location is the cytoplasm. It carries out the reaction RNA(n+1) + phosphate = RNA(n) + a ribonucleoside 5'-diphosphate. In terms of biological role, involved in mRNA degradation. Catalyzes the phosphorolysis of single-stranded polyribonucleotides processively in the 3'- to 5'-direction. The sequence is that of Polyribonucleotide nucleotidyltransferase from Cronobacter sakazakii (strain ATCC BAA-894) (Enterobacter sakazakii).